The sequence spans 318 residues: Probable metal transport system membrane protein CT_070 (318 aa).

Helical transmembrane passes span 1-21 (MVAS…LVFF), 39-59 (IQVI…TFLV), 64-84 (AMYA…VCLF), 94-114 (QALT…IHFI), 124-144 (ASTA…LVFL), 170-190 (IFLV…SFVC), 196-216 (IFAF…MLLL), 226-246 (AVGV…AKLI), 252-272 (EMMV…PALS), and 285-305 (TSGL…VFVC).

Belongs to the ABC-3 integral membrane protein family.

Its subcellular location is the cell inner membrane. Functionally, part of an ATP-driven transport system CT_067/CT_068/CT_069/CT_070 for a metal. The sequence is that of Probable metal transport system membrane protein CT_070 from Chlamydia trachomatis serovar D (strain ATCC VR-885 / DSM 19411 / UW-3/Cx).